Consider the following 198-residue polypeptide: Endonuclease V (198 aa).

Positions 38 and 101 each coordinate Mg(2+).

This sequence belongs to the endonuclease V family. The cofactor is Mg(2+).

It is found in the cytoplasm. It carries out the reaction Endonucleolytic cleavage at apurinic or apyrimidinic sites to products with a 5'-phosphate.. DNA repair enzyme involved in the repair of deaminated bases. Selectively cleaves double-stranded DNA at the second phosphodiester bond 3' to a deoxyinosine leaving behind the intact lesion on the nicked DNA. The polypeptide is Endonuclease V (Saccharolobus islandicus (strain M.16.27) (Sulfolobus islandicus)).